The chain runs to 427 residues: Glutamate-1-semialdehyde 2,1-aminomutase (427 aa).

Lys265 is subject to N6-(pyridoxal phosphate)lysine.

Belongs to the class-III pyridoxal-phosphate-dependent aminotransferase family. HemL subfamily. In terms of assembly, homodimer. Pyridoxal 5'-phosphate is required as a cofactor.

The protein resides in the cytoplasm. It catalyses the reaction (S)-4-amino-5-oxopentanoate = 5-aminolevulinate. It participates in porphyrin-containing compound metabolism; protoporphyrin-IX biosynthesis; 5-aminolevulinate from L-glutamyl-tRNA(Glu): step 2/2. The protein is Glutamate-1-semialdehyde 2,1-aminomutase of Burkholderia multivorans (strain ATCC 17616 / 249).